The primary structure comprises 412 residues: 8-amino-7-oxononanoate synthase (412 aa).

Residue Arg28 participates in substrate binding. A pyridoxal 5'-phosphate-binding site is contributed by 115-116 (GY). Position 140 (His140) interacts with substrate. Pyridoxal 5'-phosphate contacts are provided by Ser186, His214, and Thr246. At Lys249 the chain carries N6-(pyridoxal phosphate)lysine. Thr367 provides a ligand contact to substrate.

The protein belongs to the class-II pyridoxal-phosphate-dependent aminotransferase family. BioF subfamily. As to quaternary structure, homodimer. The cofactor is pyridoxal 5'-phosphate.

The catalysed reaction is 6-carboxyhexanoyl-[ACP] + L-alanine + H(+) = (8S)-8-amino-7-oxononanoate + holo-[ACP] + CO2. It participates in cofactor biosynthesis; biotin biosynthesis. Functionally, catalyzes the decarboxylative condensation of pimeloyl-[acyl-carrier protein] and L-alanine to produce 8-amino-7-oxononanoate (AON), [acyl-carrier protein], and carbon dioxide. The polypeptide is 8-amino-7-oxononanoate synthase (Paracidovorax citrulli (strain AAC00-1) (Acidovorax citrulli)).